A 326-amino-acid polypeptide reads, in one-letter code: Putative ribose-phosphate pyrophosphokinase 2 (326 aa).

Residues 43–45 and 102–103 each bind ATP; these read DGE and RQ. Histidine 136 serves as a coordination point for Mg(2+). D-ribose 5-phosphate-binding positions include aspartate 225 and 229–233; that span reads NTGKT.

Belongs to the ribose-phosphate pyrophosphokinase family. Class I subfamily. As to quaternary structure, homohexamer. Mg(2+) is required as a cofactor.

It localises to the cytoplasm. The catalysed reaction is D-ribose 5-phosphate + ATP = 5-phospho-alpha-D-ribose 1-diphosphate + AMP + H(+). Its pathway is metabolic intermediate biosynthesis; 5-phospho-alpha-D-ribose 1-diphosphate biosynthesis; 5-phospho-alpha-D-ribose 1-diphosphate from D-ribose 5-phosphate (route I): step 1/1. In terms of biological role, involved in the biosynthesis of the central metabolite phospho-alpha-D-ribosyl-1-pyrophosphate (PRPP) via the transfer of pyrophosphoryl group from ATP to 1-hydroxyl of ribose-5-phosphate (Rib-5-P). The polypeptide is Putative ribose-phosphate pyrophosphokinase 2 (Streptococcus pyogenes serotype M18 (strain MGAS8232)).